Reading from the N-terminus, the 637-residue chain is Threonine--tRNA ligase (637 aa).

The 61-residue stretch at 1–61 folds into the TGS domain; sequence MPNVKLPDGN…KEDCSLIIVT (61 aa). Positions 242 to 533 are catalytic; the sequence is DHRKLGKALD…LIEHYAGKLP (292 aa). The Zn(2+) site is built by C333, H384, and H510.

This sequence belongs to the class-II aminoacyl-tRNA synthetase family. As to quaternary structure, homodimer. Requires Zn(2+) as cofactor.

The protein localises to the cytoplasm. The enzyme catalyses tRNA(Thr) + L-threonine + ATP = L-threonyl-tRNA(Thr) + AMP + diphosphate + H(+). Its function is as follows. Catalyzes the attachment of threonine to tRNA(Thr) in a two-step reaction: L-threonine is first activated by ATP to form Thr-AMP and then transferred to the acceptor end of tRNA(Thr). Also edits incorrectly charged L-seryl-tRNA(Thr). The chain is Threonine--tRNA ligase from Legionella pneumophila (strain Paris).